The primary structure comprises 233 residues: Mediator of RNA polymerase II transcription subunit 7 (233 aa).

A Glycyl lysine isopeptide (Lys-Gly) (interchain with G-Cter in SUMO1); alternate cross-link involves residue lysine 185. Lysine 185 participates in a covalent cross-link: Glycyl lysine isopeptide (Lys-Gly) (interchain with G-Cter in SUMO2); alternate. Residues 188–213 (PMDADDSNNCTGQSDQQRENSGHRRD) form a disordered region. At serine 194 the chain carries Phosphoserine. The span at 203–213 (QQRENSGHRRD) shows a compositional bias: basic and acidic residues.

Belongs to the Mediator complex subunit 7 family. In terms of assembly, component of the Mediator complex, which is composed of MED1, MED4, MED6, MED7, MED8, MED9, MED10, MED11, MED12, MED13, MED13L, MED14, MED15, MED16, MED17, MED18, MED19, MED20, MED21, MED22, MED23, MED24, MED25, MED26, MED27, MED29, MED30, MED31, CCNC, CDK8 and CDC2L6/CDK11. The MED12, MED13, CCNC and CDK8 subunits form a distinct module termed the CDK8 module. Mediator containing the CDK8 module is less active than Mediator lacking this module in supporting transcriptional activation. Individual preparations of the Mediator complex lacking one or more distinct subunits have been variously termed ARC, CRSP, DRIP, PC2, SMCC and TRAP.

Its subcellular location is the nucleus. In terms of biological role, component of the Mediator complex, a coactivator involved in the regulated transcription of nearly all RNA polymerase II-dependent genes. Mediator functions as a bridge to convey information from gene-specific regulatory proteins to the basal RNA polymerase II transcription machinery. Mediator is recruited to promoters by direct interactions with regulatory proteins and serves as a scaffold for the assembly of a functional preinitiation complex with RNA polymerase II and the general transcription factors. The polypeptide is Mediator of RNA polymerase II transcription subunit 7 (MED7) (Sus scrofa (Pig)).